Reading from the N-terminus, the 213-residue chain is Imidazole glycerol phosphate synthase subunit HisH (213 aa).

One can recognise a Glutamine amidotransferase type-1 domain in the interval 1–212 (MLAILDYKAG…HRYCTEAADA (212 aa)). Cysteine 79 functions as the Nucleophile in the catalytic mechanism. Residues histidine 187 and glutamate 189 contribute to the active site.

Heterodimer of HisH and HisF.

The protein resides in the cytoplasm. The enzyme catalyses 5-[(5-phospho-1-deoxy-D-ribulos-1-ylimino)methylamino]-1-(5-phospho-beta-D-ribosyl)imidazole-4-carboxamide + L-glutamine = D-erythro-1-(imidazol-4-yl)glycerol 3-phosphate + 5-amino-1-(5-phospho-beta-D-ribosyl)imidazole-4-carboxamide + L-glutamate + H(+). It catalyses the reaction L-glutamine + H2O = L-glutamate + NH4(+). It participates in amino-acid biosynthesis; L-histidine biosynthesis; L-histidine from 5-phospho-alpha-D-ribose 1-diphosphate: step 5/9. IGPS catalyzes the conversion of PRFAR and glutamine to IGP, AICAR and glutamate. The HisH subunit catalyzes the hydrolysis of glutamine to glutamate and ammonia as part of the synthesis of IGP and AICAR. The resulting ammonia molecule is channeled to the active site of HisF. This is Imidazole glycerol phosphate synthase subunit HisH from Nitratidesulfovibrio vulgaris (strain DP4) (Desulfovibrio vulgaris).